A 367-amino-acid chain; its full sequence is Apolipoprotein A-V (367 aa).

An N-terminal signal peptide occupies residues methionine 1–threonine 20. Position 56 is a phosphoserine (serine 56). Residues leucine 71–glycine 90 form a disordered region.

The protein belongs to the apolipoprotein A1/A4/E family. As to quaternary structure, interacts with GPIHBP1. Interacts with SORL1; this interaction leads to APOA5 internalization and sorting either to lysosomes and degradation, or to the trans-Golgi network. In terms of processing, phosphorylated by FAM20C in the extracellular medium.

It is found in the secreted. Its subcellular location is the early endosome. The protein localises to the late endosome. The protein resides in the golgi apparatus. It localises to the trans-Golgi network. Functionally, minor apolipoprotein mainly associated with HDL and to a lesser extent with VLDL. May also be associated with chylomicrons. Important determinant of plasma triglyceride (TG) levels by both being a potent stimulator of apo-CII lipoprotein lipase (LPL) TG hydrolysis and an inhibitor of the hepatic VLDL-TG production rate (without affecting the VLDL-apoB production rate). Activates poorly lecithin:cholesterol acyltransferase (LCAT) and does not enhance efflux of cholesterol from macrophages. Binds heparin. This chain is Apolipoprotein A-V (APOA5), found in Leptonychotes weddellii (Weddell seal).